Consider the following 1841-residue polypeptide: MASSSLPTLVPPGPHCLRPFTPESLAAIEQRAMEEEARLQRNKQMEIEEPERKPRSDLEAGKNLPLIYGDPPPEVIGVPLEDLDPYYSDKKTFIVLNKGKAIFRFSATPALYMLSPFSIVRRVAIKVLIHALFSMFIMITILTNCVFMTMSNPPSWSKDVEYTFTGIYTFESLIKMLARGFCIDDFTFLRDPWNWLDFSVITMAYVTEFVDLGNISALRTFRVLRALKTITVIPGLKTIVGALIQSVKKLSDVMILTVFCLSVFALVGLQLFMGNLRQKCVRWPPPMNDTNTTWYGNDTWYGNDTWYGNDTWYGNDTWNSQESWVSNSTFDWEAYINDEGNFYFLEGSNDALLCGNSSDAGHCPEGYECMKAGRNPNYGYTSYDTFSWAFLALFRLMTQDYWENLFQLTLRAAGKTYMIFFVVIIFLGSFYLINLILAVVAMAYAEQNEATLAEDQEKEEEFQQMLEKFKKHQEELEKAKAAQALEGGEEADGDPTHSKDCNGSLDTSGEKGPPRPSCSAESAISDAMEELEEAHQKCPPWWYKCAHKVLIWNCCAPWVKFKHIILLIVMDPFVDLGITICIVLNTLFMAMEHYPMTEHFDNVLSVGNLVFTGIFTAEMVLKLIAMDPYEYFQQGWNIFDSFIVTLSLVELGLANVQGLSVLRSFRLLRVFKLAKSWPTLNMLIKIIGNSVGALGNLTLVLAIIVFIFAVVGMQLFGKSYKECVCKIASDCSLPRWHMHDFFHSFLIVFRILCGEWIETMWDCMEVAGQAMCLTVFLMVMVIGNLVVLNLFLALLLSSFSADSLAASDEDGEMNNLQIAIGRIKWGIAFAKTFLLGLLHGKILSLKDIMLSLGEPGGAGENGESPPEDEKKEPPPEDGNKELKDNHILNHVGLTDGPRSSIEMDHLNFINNPYLTIHVPIASEESDLEMPTEEETDTFSEPEDIKKPLQPLYDGNSSVCSTADYKPPEEDPEEQAEENPEGELPEECFTEACVKRCPCLYVDISQGRGKMWWTLRRACFKIVEHNWFETFIVFMILLSSGALAFEDIYIEQRRVIRTILEYADKVFTYIFILEMLLKWVAYGFKVYFTNAWCWLDFLIVDVSIISLVANWLGYSELGPIKSLRTLRALRPLRALSRFEGMRVVVNALLGAIPSIMNVLLVCLIFWLIFSIMGVNLFAGKFYYCINTTTSERFDISVVNNKSECESLMYTGQVRWMNVKVNYDNVGLGYLSLLQVATFKGWMDIMYAAVDSREKEEQPDYEVNLYMYLYFVIFIIFGSFFTLNLFIGVIIDNFNQQKKKFGGKDIFMTEEQKKYYNAMKKLGSKKPQKPIPRPQNKIQGMVYDFVTKQVFDISIMILICLNMVTMMVETDDQSQLKVDILYNINMVFIIVFTGECVLKMFALRHYYFTIGWNIFDFVVVILSIVGLALSDLIQKYFVSPTLFRVIRLARIGRVLRLIRGAKGIRTLLFALMMSLPALFNIGLLLFLVMFIYSIFGMSNFAYVKKESGIDDMFNFETFGNSIICLFEITTSAGWDGLLNPILNSGPPDCDPTLENPGTNIKGDCGNPSIGICFFCSYIIISFLIVVNMYIAIILENFNVATEESSEPLCEDDFEMFYETWEKFDPDATQFIDYSRLSDFVDTLQEPLKIAKPNKIKLITLDLPMVPGDKIHCLDILFALTKEVLGDSGEMDALKQTMEEKFMAANPSKVSYEPITTTLKRKQEEVCAIKIQRAYRRHLLQRSVKQASYMYRHSQEGNGDGAPEKEGLLANTMNKMYGSEKEDNGVQSQGEKEKDSTEDAGPTTEVTAPSSSDTALTPPPPSPPPPSSPPQGQTVRPGVKESLV.

Residues M1 to A131 lie on the Cytoplasmic side of the membrane. A compositionally biased stretch (basic and acidic residues) spans A32–A60. A disordered region spans residues A32–N63. One copy of the I repeat lies at M113–N448. A helical transmembrane segment spans residues L132–M150. The Extracellular segment spans residues S151–S157. Residues K158–A178 form a helical membrane-spanning segment. Residues R179–P192 lie on the Cytoplasmic side of the membrane. Residues W193 to V210 traverse the membrane as a helical segment. Over D211–S216 the chain is Extracellular. Residue N214 is glycosylated (N-linked (GlcNAc...) asparagine). Residues A217–I233 form a helical membrane-spanning segment. The Cytoplasmic portion of the chain corresponds to P234 to D252. Residues V253–F272 traverse the membrane as a helical segment. Residues M273–T385 lie on the Extracellular side of the membrane. C280 and C354 are oxidised to a cystine. N-linked (GlcNAc...) asparagine glycans are attached at residues N288, N291, N297, N303, N315, N327, and N356. C363 and C369 are oxidised to a cystine. Positions F386 to L410 form an intramembrane region, pore-forming. The Extracellular segment spans residues R411–Y417. A helical transmembrane segment spans residues M418–A438. The Cytoplasmic portion of the chain corresponds to V439–P572. Residues A484–S522 are disordered. Residues C554–G826 form an II repeat. A helical membrane pass occupies residues F573–M591. The Extracellular portion of the chain corresponds to E592 to N602. A helical transmembrane segment spans residues V603–K622. At L623–W636 the chain is on the cytoplasmic side. A helical membrane pass occupies residues N637–V656. Residues Q657–G658 are Extracellular-facing. A helical transmembrane segment spans residues L659–S676. At W677–G692 the chain is on the cytoplasmic side. Residues A693–V711 traverse the membrane as a helical segment. Residues G712–D740 are Extracellular-facing. C725 and C731 are joined by a disulfide. An intramembrane region (pore-forming) is located at residues F741–W761. Topologically, residues D762 to C772 are extracellular. A disulfide bridge links C763 with C772. Residues L773–F791 form a helical membrane-spanning segment. The Cytoplasmic portion of the chain corresponds to L792–W1026. Disordered regions lie at residues E854–G896 and S925–L983. Residues E867 to I887 show a composition bias toward basic and acidic residues. Composition is skewed to acidic residues over residues S925 to P941 and E969 to L983. One copy of the III repeat lies at R1007 to L1320. A helical transmembrane segment spans residues F1027–F1044. At E1045–T1057 the chain is on the extracellular side. The helical transmembrane segment at I1058–L1076 threads the bilayer. Residues K1077–A1090 are Cytoplasmic-facing. The helical transmembrane segment at W1091 to N1109 threads the bilayer. The Extracellular segment spans residues W1110–G1117. Residues P1118 to R1136 traverse the membrane as a helical segment. Topologically, residues F1137 to S1153 are cytoplasmic. The chain crosses the membrane as a helical span at residues I1154 to V1173. At N1174–V1224 the chain is on the extracellular side. Cysteines 1183 and 1203 form a disulfide. N1185 and N1199 each carry an N-linked (GlcNAc...) asparagine glycan. Positions G1225 to A1246 form an intramembrane region, pore-forming. At A1247 to L1263 the chain is on the extracellular side. The helical transmembrane segment at Y1264–I1285 threads the bilayer. Over G1286–V1348 the chain is Cytoplasmic. Residues I1304–M1306 are important for rapid channel inactivation. The IV repeat unit spans residues I1329–Q1627. Residues F1349–V1366 form a helical membrane-spanning segment. The Extracellular segment spans residues E1367–D1377. Residues I1378–L1396 form a helical membrane-spanning segment. Residues K1397–I1408 lie on the Cytoplasmic side of the membrane. A helical membrane pass occupies residues G1409–A1426. At L1427–T1439 the chain is on the extracellular side. Residues L1440 to I1456 form a helical membrane-spanning segment. The Cytoplasmic segment spans residues R1457–A1475. A helical membrane pass occupies residues L1476–F1493. At G1494–T1515 the chain is on the extracellular side. An intramembrane region (pore-forming) is located at residues F1516–P1538. The Extracellular portion of the chain corresponds to I1539 to G1568. A disulfide bridge links C1547 with C1562. The helical transmembrane segment at I1569–I1591 threads the bilayer. The Cytoplasmic portion of the chain corresponds to L1592–V1841. In terms of domain architecture, IQ spans E1721–H1750. The span at S1776 to T1794 shows a compositional bias: basic and acidic residues. The disordered stretch occupies residues S1776–V1841. Polar residues predominate over residues T1801–A1812. The segment covering T1814–P1826 has biased composition (pro residues).

The protein belongs to the sodium channel (TC 1.A.1.10) family. Nav1.4/SCN4A subfamily. The Nav1.4 voltage-gated sodium channel consists of an ion-conducting alpha subunit SCN4A which is functional on its own and a regulatory beta subunit SCN1B. SCN1B strongly enhances the presence of SCN4A at the cell surface. SCN1B is also required for rapid channel inactivation and recovery after inactivation. It prevents the decrease of channel activity in response to repetitive, high-frequency depolarizations. Interacts with the syntrophins SNTA1, SNTB1 and SNTB2 (via PDZ domain); probably links SCN4A to the actin cytoskeleton and the extracellular matrix via the dystrophin-associated protein complex and regulates its localization in muscle cells. Interacts with TMEM233; probable regulator of the channel. As to expression, detected in quadriceps muscle (at protein level). Detected in hind-limb skeletal muscles, but not in heart or brain. Detected at low levels in the myocardium. According to Pubme=26427606 detected also in brain.

It localises to the cell membrane. It carries out the reaction Na(+)(in) = Na(+)(out). With respect to regulation, the channel is inhibited by tetrodotoxin. Functionally, pore-forming subunit of Nav1.4, a voltage-gated sodium (Nav) channel that directly mediates the depolarizing phase of action potentials in excitable membranes. Navs, also called VGSCs (voltage-gated sodium channels) or VDSCs (voltage-dependent sodium channels), operate by switching between closed and open conformations depending on the voltage difference across the membrane. In the open conformation they allow Na(+) ions to selectively pass through the pore, along their electrochemical gradient. The influx of Na+ ions provokes membrane depolarization, initiating the propagation of electrical signals throughout cells and tissues. Highly expressed in skeletal muscles, Nav1.4 generates the action potential crucial for muscle contraction. This chain is Sodium channel protein type 4 subunit alpha, found in Mus musculus (Mouse).